The primary structure comprises 184 residues: Ribulose bisphosphate carboxylase small subunit, chloroplastic 5 (184 aa).

Residues Met1–Arg43 constitute a chloroplast transit peptide.

It belongs to the RuBisCO small chain family. As to quaternary structure, heterohexadecamer of 8 large and 8 small subunits.

It is found in the plastid. The protein resides in the chloroplast. RuBisCO catalyzes two reactions: the carboxylation of D-ribulose 1,5-bisphosphate, the primary event in carbon dioxide fixation, as well as the oxidative fragmentation of the pentose substrate. Both reactions occur simultaneously and in competition at the same active site. Although the small subunit is not catalytic it is essential for maximal activity. This Acetabularia peniculus (Green alga) protein is Ribulose bisphosphate carboxylase small subunit, chloroplastic 5.